Consider the following 347-residue polypeptide: Probable replication factor C subunit 5 (347 aa).

64 to 71 contributes to the ATP binding site; sequence GPPGTGKT.

It belongs to the activator 1 small subunits family. In terms of assembly, heteropentamer of various rfc subunits that forms a complex (RFC) with PCNA in the presence of ATP.

It localises to the nucleus. In terms of biological role, the elongation of primed DNA templates by DNA polymerase delta and epsilon requires the action of the accessory proteins PCNA and activator 1. This chain is Probable replication factor C subunit 5 (rfc5), found in Dictyostelium discoideum (Social amoeba).